Here is a 577-residue protein sequence, read N- to C-terminus: Arginine--tRNA ligase (577 aa).

The 'HIGH' region motif lies at 122–132 (PNVAKEMHVGH).

It belongs to the class-I aminoacyl-tRNA synthetase family. In terms of assembly, monomer.

It localises to the cytoplasm. It carries out the reaction tRNA(Arg) + L-arginine + ATP = L-arginyl-tRNA(Arg) + AMP + diphosphate. This Escherichia coli O157:H7 (strain EC4115 / EHEC) protein is Arginine--tRNA ligase.